The chain runs to 365 residues: GDSL lipase (365 aa).

A signal peptide spans Met1–Ser27. The Nucleophile role is filled by Ser40. N-linked (GlcNAc...) asparagine glycans are attached at residues Asn189 and Asn310. Residues Asp318 and His321 each act as charge relay system in the active site.

Belongs to the 'GDSL' lipolytic enzyme family. Restricted to the pericarp during achene maturation. Expressed in the leaves of mature plants and seedlings, as well as in buds and flowers. Present in disk florets.

The protein localises to the secreted. Its subcellular location is the extracellular space. The enzyme catalyses (Z,S)-pyrethrolone + (1R,3R)-chrysanthemoyl-CoA = pyrethrin I + CoA. The catalysed reaction is (Z,S)-pyrethrolone + (1R,3R)-pyrethroyl-CoA = pyrethrin II + CoA. It catalyses the reaction (Z,S)-jasmololone + (1R,3R)-chrysanthemoyl-CoA = jasmolin I + CoA. It carries out the reaction (Z,S)-cinerolone + (1R,3R)-chrysanthemoyl-CoA = cinerin I + CoA. The enzyme catalyses (Z,S)-jasmololone + (1R,3R)-pyrethroyl-CoA = jasmolin II + CoA. The catalysed reaction is (Z,S)-cinerolone + (1R,3R)-pyrethroyl-CoA = cinerin II + CoA. It functions in the pathway isoprenoid biosynthesis. In terms of biological role, component of the monoterpenoid pyrethrins biosynthesis; pyrethrins are widely used plant-derived pesticide. Acyltransferase that catalyzes the esterification of terpene acids and lipid alcohol substrates into pyrethrins; mediates the transfer of a chrysanthemoyl moiety from the coenzyme A (CoA) thio-ester chrysanthemoyl CoA to pyrethrolone, and, to a lower extent, to jasmololone and cinerolone thus producing pyrethrins (e.g. pyrethrin type I). Can also use pyrethroyl CoA as substrate. Also has esterase activity, being able to cleave the ester bond of pyrethrin I, p-nitrophenyl butanoate and p-nitrophenyl octanoate to produce pyrethrolone and p-nitrophenol, respectively. The polypeptide is GDSL lipase (Tanacetum cinerariifolium (Dalmatian daisy)).